The primary structure comprises 146 residues: uncharacterized protein (146 aa).

The helical transmembrane segment at 7-27 threads the bilayer; sequence FVLSITIVLVILIIIAFIWYN.

Belongs to the asfivirus E146L family.

Its subcellular location is the host membrane. It is found in the virion. This is an uncharacterized protein from African swine fever virus (strain Badajoz 1971 Vero-adapted) (Ba71V).